The chain runs to 28 residues: IDPVNVKKLQCDGDTYKCTADLDFGDGR.

In terms of assembly, homohexamer. As to expression, expressed by mycelium-forming spores.

It is found in the secreted. Its function is as follows. Alpha-(1-6)-linked L-fucose specific lectin. The chain is Alpha-(1-6)-linked fucose-specific lectin from Rhizopus stolonifer (Rhizopus nigricans).